The primary structure comprises 150 residues: UPF0756 membrane protein Dd1591_2981 (150 aa).

A run of 4 helical transmembrane segments spans residues 10 to 32 (ILLA…AILF), 51 to 71 (YGLS…IASG), 88 to 108 (LMAV…VVLM), and 127 to 147 (ALFR…SLLI).

This sequence belongs to the UPF0756 family.

The protein resides in the cell membrane. This is UPF0756 membrane protein Dd1591_2981 from Dickeya chrysanthemi (strain Ech1591) (Dickeya zeae (strain Ech1591)).